A 572-amino-acid polypeptide reads, in one-letter code: Dityrosine transporter 1 (572 aa).

Disordered stretches follow at residues 1 to 28 and 49 to 95; these read MGSE…STFH and RANI…SPDT. Over 1 to 110 the chain is Cytoplasmic; that stretch reads MGSEPFQKKN…YTYFSKDQRL (110 aa). The segment covering 13-28 has biased composition (polar residues); the sequence is LQINSQESGTTRSTFH. Over residues 50-62 the composition is skewed to basic and acidic residues; it reads ANIDHDVFHEHPD. Polar residues predominate over residues 83–95; it reads SSNSQSRDPSPDT. Residues 111–131 traverse the membrane as a helical segment; sequence IIFGIIIFIGFLGPMSGNIYI. At 132 to 149 the chain is on the extracellular side; that stretch reads PALPLLQREYDVSATTIN. The chain crosses the membrane as a helical span at residues 150–170; sequence ATVSVFMAVFSVGPLFWGALA. At 171-184 the chain is on the cytoplasmic side; it reads DFGGRKFLYMVSLS. A helical membrane pass occupies residues 185–205; sequence LMLIVNILLAAVPVNIAALFV. Residues 206-207 lie on the Extracellular side of the membrane; sequence LR. Residues 208-228 traverse the membrane as a helical segment; the sequence is IFQAFASSSVISLGAGTVTDV. Residues 229–240 lie on the Cytoplasmic side of the membrane; that stretch reads VPPKHRGKAIAY. A helical membrane pass occupies residues 241 to 261; it reads FMMGPNMGPIIAPIVAGLILM. Topologically, residues 262-267 are extracellular; sequence KGNYWR. Residues 268–288 traverse the membrane as a helical segment; sequence WLFGFTSIMTGIALILVTALL. At 289–366 the chain is on the cytoplasmic side; sequence PETLRCIVGN…TLYWKMIKCP (78 aa). A helical transmembrane segment spans residues 367-387; the sequence is PIIITSVSTALLFSSYYAFSV. The Extracellular segment spans residues 388-398; sequence TFSYYLEHDYR. Residues 399–419 traverse the membrane as a helical segment; that stretch reads FTMLEIGAAYVCPGVAMLLGS. The Cytoplasmic portion of the chain corresponds to 420 to 446; the sequence is QSGGHLSDYLRSRWIKSHPKKKFPAEF. Residues 447-469 form a helical membrane-spanning segment; that stretch reads RLLLNLIGILLTICGTIGYGWAI. The Extracellular segment spans residues 470–472; the sequence is FFH. Residues 473-493 traverse the membrane as a helical segment; that stretch reads YHFVVLLVFSALTAFGMTWCS. Topologically, residues 494 to 520 are cytoplasmic; that stretch reads NTSMTYLTELFPKRAAGTVAVSSFFRN. A helical membrane pass occupies residues 521 to 541; sequence VGAAISSAIILQLCNAMGIGW. Cys542 is a topological domain (extracellular). A helical transmembrane segment spans residues 543–563; the sequence is FTGLGLCSSISLIGILYLLIF. A required for the localization to the prospore membrane region spans residues 548-572; that stretch reads LCSSISLIGILYLLIFQRKYTAKEF. Residues 564-572 are Cytoplasmic-facing; it reads QRKYTAKEF.

Belongs to the major facilitator superfamily. CAR1 family. Phosphorylated.

Its subcellular location is the prospore membrane. Its function is as follows. Prospore-specific dityrosine transporter responsible for translocation of dityrosine through the prospore membrane and required for the formation of the outermost layer of the spore. The polypeptide is Dityrosine transporter 1 (DTR1) (Saccharomyces cerevisiae (strain ATCC 204508 / S288c) (Baker's yeast)).